The following is a 305-amino-acid chain: Porphobilinogen deaminase (305 aa).

Position 238 is an S-(dipyrrolylmethanemethyl)cysteine (Cys238).

This sequence belongs to the HMBS family. Monomer. Requires dipyrromethane as cofactor.

It carries out the reaction 4 porphobilinogen + H2O = hydroxymethylbilane + 4 NH4(+). It participates in porphyrin-containing compound metabolism; protoporphyrin-IX biosynthesis; coproporphyrinogen-III from 5-aminolevulinate: step 2/4. Tetrapolymerization of the monopyrrole PBG into the hydroxymethylbilane pre-uroporphyrinogen in several discrete steps. The sequence is that of Porphobilinogen deaminase from Rubrobacter xylanophilus (strain DSM 9941 / JCM 11954 / NBRC 16129 / PRD-1).